The sequence spans 126 residues: Protein ApaG (126 aa).

The ApaG domain maps to Ser2–His126.

The protein is Protein ApaG of Pseudomonas syringae pv. tomato (strain ATCC BAA-871 / DC3000).